We begin with the raw amino-acid sequence, 142 residues long: MLTHKIIGLDVGSKTVGVAVSDLMGWTAQGLDTLRINEEENELGITKLAEIIKKEDADTVVIGLPKNMNNSIGFRGEASLKYKEELLKILPDINVVMWDERLSTMAAERSLLEADVSRSKRKKVIDKMAAVFILQGYLDSLQ.

The protein belongs to the YqgF nuclease family.

The protein localises to the cytoplasm. In terms of biological role, could be a nuclease involved in processing of the 5'-end of pre-16S rRNA. The sequence is that of Putative pre-16S rRNA nuclease from Staphylococcus carnosus (strain TM300).